Here is a 313-residue protein sequence, read N- to C-terminus: uncharacterized protein (313 aa).

The N-terminal stretch at 1-24 is a signal peptide; the sequence is MKRRRRWRGWLLFLALCFCLLCEA. N-linked (GlcNAc...) asparagine; by host glycosylation is found at Asn28, Asn43, Asn57, Asn77, Asn101, Asn102, Asn109, Asn149, Asn168, Asn215, Asn222, Asn251, Asn254, and Asn267. Positions 47 to 73 are disordered; sequence ATTGTTTTSPNVTSTTSNTVTTPTTVS. Residues 90–114 are compositionally biased toward low complexity; sequence STVSGTRNTRNNNTTTIGTNATSPS. The segment at 90 to 117 is disordered; the sequence is STVSGTRNTRNNNTTTIGTNATSPSSSV.

Belongs to the HHV-5 US34A protein family.

This is an uncharacterized protein from Homo sapiens (Human).